The primary structure comprises 308 residues: Malate dehydrogenase (308 aa).

NAD(+) contacts are provided by residues 6–11 and D31; that span reads GSGRVG. Residues R80 and R86 each contribute to the substrate site. NAD(+) is bound by residues N93 and 116–118; that span reads TTN. The substrate site is built by N118 and R149. The active-site Proton acceptor is H173.

This sequence belongs to the LDH/MDH superfamily.

The catalysed reaction is (S)-malate + NAD(+) = oxaloacetate + NADH + H(+). In terms of biological role, catalyzes the reversible oxidation of malate to oxaloacetate. This is Malate dehydrogenase (mdh) from Thermoproteus tenax (strain ATCC 35583 / DSM 2078 / JCM 9277 / NBRC 100435 / Kra 1).